The chain runs to 657 residues: Heat shock protein hsp-6 (657 aa).

A mitochondrion-targeting transit peptide spans 1 to 27; that stretch reads MLSARSFLSSARTIARSSLMSARSLSD. Residues 637 to 657 are disordered; it reads KNSGGDAQEAKTAEEPKKEQN. The segment covering 644 to 657 has biased composition (basic and acidic residues); it reads QEAKTAEEPKKEQN.

It belongs to the heat shock protein 70 family.

Its subcellular location is the mitochondrion. The polypeptide is Heat shock protein hsp-6 (Caenorhabditis elegans).